Consider the following 430-residue polypeptide: Transcription factor iws-1 (430 aa).

A compositionally biased stretch (low complexity) spans 1–14 (MSDAASPAGSPAAE). The tract at residues 1–153 (MSDAASPAGS…EENLTPDERR (153 aa)) is disordered. Residues 15–33 (PTEHRDEDQVNETHQDDGS) show a composition bias toward basic and acidic residues. The segment covering 52–63 (VLSEIDENEFGD) has biased composition (acidic residues). A compositionally biased stretch (basic residues) spans 95-104 (KEGRRPKKRS). Residues 124-137 (VRAEGERRARKEVE) show a composition bias toward basic and acidic residues. A TFIIS N-terminal domain is found at 244 to 321 (QSVRYFLEPL…GEWSRLILKR (78 aa)). The interval 402-430 (GQAPTDHRPIGHSGHEAFRRMTQKGKGKR) is disordered. Basic and acidic residues predominate over residues 406–420 (TDHRPIGHSGHEAFR).

Belongs to the IWS1 family.

Its subcellular location is the nucleus. Functionally, transcription factor involved in RNA polymerase II transcription regulation. May function in both SPT15/TBP post-recruitment and recruitment steps of transcription. This chain is Transcription factor iws-1 (iws-1), found in Neurospora crassa (strain ATCC 24698 / 74-OR23-1A / CBS 708.71 / DSM 1257 / FGSC 987).